We begin with the raw amino-acid sequence, 200 residues long: MARYTGPSWKLSRRLGISLSGTGKELEKRPYAPGPHGPGQRKKLSEYGLQLQEKQKLRHMYGVNERQFRNLFDKAAKMAGKHGENFMILLESRLDNIVYRLGLARTRRQARQLVNHGHVLVDGSRVDIPSYQVKPGQTISLREKSQNLSVVKEAVEVNNFVPEYLTFDAEKLEGSLTRLPERSELPAEINEALIVEFYSR.

Residues 22–42 are disordered; that stretch reads TGKELEKRPYAPGPHGPGQRK. Positions 92–152 constitute an S4 RNA-binding domain; that stretch reads SRLDNIVYRL…EKSQNLSVVK (61 aa).

It belongs to the universal ribosomal protein uS4 family. In terms of assembly, part of the 30S ribosomal subunit. Contacts protein S5. The interaction surface between S4 and S5 is involved in control of translational fidelity.

Its function is as follows. One of the primary rRNA binding proteins, it binds directly to 16S rRNA where it nucleates assembly of the body of the 30S subunit. In terms of biological role, with S5 and S12 plays an important role in translational accuracy. In Bacillus licheniformis (strain ATCC 14580 / DSM 13 / JCM 2505 / CCUG 7422 / NBRC 12200 / NCIMB 9375 / NCTC 10341 / NRRL NRS-1264 / Gibson 46), this protein is Small ribosomal subunit protein uS4.